Reading from the N-terminus, the 125-residue chain is Probable prefoldin subunit 6 (125 aa).

Belongs to the prefoldin subunit beta family. In terms of assembly, heterohexamer of two PFD-alpha type and four PFD-beta type subunits.

Its function is as follows. Binds specifically to cytosolic chaperonin (c-CPN) and transfers target proteins to it. Binds to nascent polypeptide chain and promotes folding in an environment in which there are many competing pathways for nonnative proteins. This is Probable prefoldin subunit 6 from Drosophila melanogaster (Fruit fly).